The primary structure comprises 227 residues: Ribose-5-phosphate isomerase A (227 aa).

Residues 28 to 31 (TGST), 84 to 87 (DGAD), and 97 to 100 (KGGG) contribute to the substrate site. The active-site Proton acceptor is E106. K124 is a substrate binding site.

It belongs to the ribose 5-phosphate isomerase family. As to quaternary structure, homodimer.

It carries out the reaction aldehydo-D-ribose 5-phosphate = D-ribulose 5-phosphate. The protein operates within carbohydrate degradation; pentose phosphate pathway; D-ribose 5-phosphate from D-ribulose 5-phosphate (non-oxidative stage): step 1/1. Catalyzes the reversible conversion of ribose-5-phosphate to ribulose 5-phosphate. The chain is Ribose-5-phosphate isomerase A from Lactiplantibacillus plantarum (strain ATCC BAA-793 / NCIMB 8826 / WCFS1) (Lactobacillus plantarum).